Reading from the N-terminus, the 355-residue chain is Protein RecA (355 aa).

Residue 65–72 (GPESSGKT) participates in ATP binding.

This sequence belongs to the RecA family.

It is found in the cytoplasm. Functionally, can catalyze the hydrolysis of ATP in the presence of single-stranded DNA, the ATP-dependent uptake of single-stranded DNA by duplex DNA, and the ATP-dependent hybridization of homologous single-stranded DNAs. It interacts with LexA causing its activation and leading to its autocatalytic cleavage. The sequence is that of Protein RecA from Pseudomonas putida (Arthrobacter siderocapsulatus).